Consider the following 295-residue polypeptide: Cytidine deaminase (295 aa).

CMP/dCMP-type deaminase domains lie at 48-168 (EDAD…FGPA) and 187-295 (DDDE…YLSL). 89–91 (NME) contacts substrate. Histidine 102 provides a ligand contact to Zn(2+). The active-site Proton donor is glutamate 104. 2 residues coordinate Zn(2+): cysteine 129 and cysteine 132.

This sequence belongs to the cytidine and deoxycytidylate deaminase family. In terms of assembly, homodimer. Requires Zn(2+) as cofactor.

The enzyme catalyses cytidine + H2O + H(+) = uridine + NH4(+). It catalyses the reaction 2'-deoxycytidine + H2O + H(+) = 2'-deoxyuridine + NH4(+). This enzyme scavenges exogenous and endogenous cytidine and 2'-deoxycytidine for UMP synthesis. This Vibrio cholerae serotype O1 (strain ATCC 39315 / El Tor Inaba N16961) protein is Cytidine deaminase.